The sequence spans 449 residues: Malonyl-CoA:anthocyanidin 5-O-glucoside-6''-O-malonyltransferase (449 aa).

At Met1 the chain carries N-acetylmethionine. Catalysis depends on proton acceptor residues His162 and Asp394.

Belongs to the plant acyltransferase family. In terms of tissue distribution, expressed in flowers. Detected in leaves, stems, roots and siliques.

The enzyme catalyses anthocyanin A3 + malonyl-CoA = anthocyanin A5 + CoA. The catalysed reaction is anthocyanin A7 + malonyl-CoA = anthocyanin A9 + CoA. It carries out the reaction anthocyanin A6 + malonyl-CoA = anthocyanin A8 + CoA. It catalyses the reaction anthocyanin A10 + malonyl-CoA = anthocyanin A11 + CoA. Its function is as follows. Catalyzes the malonylation of the 5-O-glucose residue of anthocyanins, using malonyl-CoA as the malonyl donor. Acts only on anthocyanin substrates containing a 5-O-glucosyl moiety. Acts on the four native A.thaliana anthocyanins, A3, A7, and to a lesser extent, A6 and A10. Can also use the non-native anthocyanin compounds cyanin (cyanidin 3,5-diglucoside), malvin, pelargonidin 3,5-diglucoside, peonidin 3,5-diglucoside, cyanidin 3-coumaroylglucoside 5-glucoside, delphinidin 3-coumaroylrutinoside 5-glucoside and petunidin 3-coumaroylrutinoside 5-glucoside as substrates. Is the sole enzyme responsible for producing malonylated anthocyanin 5-O-glucosides in A.thaliana. Is not able to catalyze acyl transfer using acetyl-CoA, butyryl-CoA, hexanoyl-CoA, benzoyl-CoA, cinnamoyl-CoA, methylmalonyl-CoA, succinyl-CoA, p-coumaroyl-CoA or caffeoyl-CoA. The sequence is that of Malonyl-CoA:anthocyanidin 5-O-glucoside-6''-O-malonyltransferase (5MAT) from Arabidopsis thaliana (Mouse-ear cress).